We begin with the raw amino-acid sequence, 361 residues long: Peptide chain release factor 1 (361 aa).

N5-methylglutamine is present on Gln-236.

The protein belongs to the prokaryotic/mitochondrial release factor family. Post-translationally, methylated by PrmC. Methylation increases the termination efficiency of RF1.

Its subcellular location is the cytoplasm. Functionally, peptide chain release factor 1 directs the termination of translation in response to the peptide chain termination codons UAG and UAA. The sequence is that of Peptide chain release factor 1 from Lactobacillus acidophilus (strain ATCC 700396 / NCK56 / N2 / NCFM).